The primary structure comprises 200 residues: Putative vacuolar protein sorting-associated protein 24 homolog 2 (200 aa).

Residues 2–23 (TIKSLLSDIEREERNVHKAIKD) adopt a coiled-coil conformation.

Belongs to the SNF7 family. As to quaternary structure, component of the endosomal sorting required for transport complex III (ESCRT-III), composed at least of VPS2, VPS20, VPS24 and VPS32.

It localises to the endosome. Component of the ESCRT-III complex, which is required for multivesicular bodies (MVBs) formation and sorting of endosomal cargo proteins into MVBs. The ESCRT-III complex is probably involved in the concentration of MVB cargo. This Arabidopsis thaliana (Mouse-ear cress) protein is Putative vacuolar protein sorting-associated protein 24 homolog 2 (VPS24-2).